We begin with the raw amino-acid sequence, 72 residues long: Large ribosomal subunit protein uL29 (72 aa).

The protein belongs to the universal ribosomal protein uL29 family.

This Rhodopirellula baltica (strain DSM 10527 / NCIMB 13988 / SH1) protein is Large ribosomal subunit protein uL29.